The primary structure comprises 277 residues: Large ribosomal subunit protein uL2 (277 aa).

3 disordered regions span residues 1–20 (MGIR…SVSD), 27–55 (TQPE…RHRG), and 207–277 (KAGR…RNQS). Residues 27 to 48 (TQPEKSLTTYKHSSQGRNNRGV) show a composition bias toward polar residues. 2 stretches are compositionally biased toward basic residues: residues 207–220 (KAGR…RPHV) and 259–277 (TRNR…RNQS).

It belongs to the universal ribosomal protein uL2 family. As to quaternary structure, part of the 50S ribosomal subunit. Forms a bridge to the 30S subunit in the 70S ribosome.

Its function is as follows. One of the primary rRNA binding proteins. Required for association of the 30S and 50S subunits to form the 70S ribosome, for tRNA binding and peptide bond formation. It has been suggested to have peptidyltransferase activity; this is somewhat controversial. Makes several contacts with the 16S rRNA in the 70S ribosome. This chain is Large ribosomal subunit protein uL2, found in Gloeothece citriformis (strain PCC 7424) (Cyanothece sp. (strain PCC 7424)).